Consider the following 88-residue polypeptide: UPF0297 protein Bcer98_3100 (88 aa).

The protein belongs to the UPF0297 family.

This Bacillus cytotoxicus (strain DSM 22905 / CIP 110041 / 391-98 / NVH 391-98) protein is UPF0297 protein Bcer98_3100.